The primary structure comprises 424 residues: Endoglucanase 1 (424 aa).

The N-terminal stretch at methionine 1–alanine 18 is a signal peptide. 9 disulfide bridges follow: cysteine 35–cysteine 41, cysteine 68–cysteine 90, cysteine 80–cysteine 86, cysteine 156–cysteine 384, cysteine 188–cysteine 211, cysteine 192–cysteine 210, cysteine 231–cysteine 250, cysteine 239–cysteine 244, and cysteine 255–cysteine 331. An N-linked (GlcNAc...) asparagine glycan is attached at asparagine 76. Glutamate 213 functions as the Nucleophile in the catalytic mechanism. Catalysis depends on glutamate 218, which acts as the Proton donor. Asparagine 271 and asparagine 385 each carry an N-linked (GlcNAc...) asparagine glycan.

The protein belongs to the glycosyl hydrolase 7 (cellulase C) family. In terms of assembly, monomer.

The protein localises to the secreted. It catalyses the reaction Endohydrolysis of (1-&gt;4)-beta-D-glucosidic linkages in cellulose, lichenin and cereal beta-D-glucans.. Endoglucanase that is involved in the biological conversion of cellulose to glucose. Hydrolyzes internal beta-1,4-glucosidic bonds. The chain is Endoglucanase 1 from Pyricularia oryzae (strain 70-15 / ATCC MYA-4617 / FGSC 8958) (Rice blast fungus).